The sequence spans 581 residues: MYRRNGLPASVSITSRNTQDSSSSESLDGRSLDSAKSFDAVVFDMLKVTPEEFASQITLMDAPVFKAIQPEELASCGWNKKEKHSLSPNVVAFTRRFNQVSFWAVREILTAQTLKIRAEILGHFIKIAKKLLELNNLHSLVSVVSALQSAPIFRLSKTWALISRKDKATFEKLDFLTSKEENYNRMREYTRSLKMAPCIPYLGIYLFDMTYIDSAYPASDSIIETEQRTNQMNNLLRIISDLQVSCKYDHLITLPHVQKYLMSVRYIEELQKFVEDDNYSLSLKIEPGNSSPRLVSSKEDLGGPSEVSMSVRYNRRPTCPDTSVVAHLPTPPPARHRKSHSLGNNMMCQFGVVESKSATFPEKEKARHLLDDSFLESHSPVRNHTHDSVFTNGISLGSRESSFSDELSSTVERGRMYATLGPNWRVPICNSPRSRSYIYSTPGAVSSYECSTLSSITIEGPLRRKTLMKEGKKPTLSSWKRYWIVLSGSILIYFGSKALRANERRHYKSRPCKKITLTGWMVVLPDNPEHPNIFQLTDPDRGNVYKFQTGSRFSAIIWHRHLAEACRSTRPQMPANLMSFE.

The tract at residues 1–31 is disordered; it reads MYRRNGLPASVSITSRNTQDSSSSESLDGRS. The Ras-GEF domain maps to 49–288; that stretch reads TPEEFASQIT…YSLSLKIEPG (240 aa). The disordered stretch occupies residues 320–339; that stretch reads PDTSVVAHLPTPPPARHRKS. Residues 329-332 carry the PXXP motif; sequence PTPP. Residues 455–567 enclose the PH domain; it reads SITIEGPLRR…WHRHLAEACR (113 aa).

The protein localises to the cytoplasm. It localises to the cell membrane. Its function is as follows. Guanine nucleotide exchange factor. May be involved in cytoskeletal organization. This is Ras-specific guanine nucleotide-releasing factor RalGPS1 (ralgps1) from Danio rerio (Zebrafish).